The sequence spans 446 residues: Deoxyguanosinetriphosphate triphosphohydrolase-like protein (446 aa).

A disordered region spans residues 1–28 (MSSSVWQERRHGEDKQRRNDHRSPFQRD). Over residues 7–28 (QERRHGEDKQRRNDHRSPFQRD) the composition is skewed to basic and acidic residues. Residues 59-252 (RLTHSLEVSQ…MELADDIAYA (194 aa)) enclose the HD domain.

It belongs to the dGTPase family. Type 2 subfamily.

This Shewanella sp. (strain ANA-3) protein is Deoxyguanosinetriphosphate triphosphohydrolase-like protein.